The chain runs to 444 residues: Elongation factor 1-alpha (444 aa).

The tr-type G domain occupies 15–236; the sequence is KPHINLAVVG…VLDTFQPPPR (222 aa). The interval 24 to 31 is G1; it reads GHVDNGKS. 24-31 contacts GTP; it reads GHVDNGKS. Position 31 (serine 31) interacts with Mg(2+). Residues 80–84 form a G2 region; sequence GVTIE. The interval 101–104 is G3; that stretch reads DLPG. GTP-binding positions include 101-105 and 163-166; these read DLPGH and NKMD. A G4 region spans residues 163–166; the sequence is NKMD. Residues 202–204 form a G5 region; it reads SAV.

The protein belongs to the TRAFAC class translation factor GTPase superfamily. Classic translation factor GTPase family. EF-Tu/EF-1A subfamily.

The protein localises to the cytoplasm. The catalysed reaction is GTP + H2O = GDP + phosphate + H(+). GTP hydrolase that promotes the GTP-dependent binding of aminoacyl-tRNA to the A-site of ribosomes during protein biosynthesis. The polypeptide is Elongation factor 1-alpha (Pyrobaculum arsenaticum (strain DSM 13514 / JCM 11321 / PZ6)).